The following is a 61-amino-acid chain: Small ribosomal subunit protein uS14C (61 aa).

Zn(2+) is bound by residues C24, C27, C40, and C43.

This sequence belongs to the universal ribosomal protein uS14 family. Zinc-binding uS14 subfamily. In terms of assembly, part of the 30S ribosomal subunit. Contacts proteins S3 and S10. It depends on Zn(2+) as a cofactor.

Functionally, binds 16S rRNA, required for the assembly of 30S particles and may also be responsible for determining the conformation of the 16S rRNA at the A site. The polypeptide is Small ribosomal subunit protein uS14C (Bacillus licheniformis (strain ATCC 14580 / DSM 13 / JCM 2505 / CCUG 7422 / NBRC 12200 / NCIMB 9375 / NCTC 10341 / NRRL NRS-1264 / Gibson 46)).